The primary structure comprises 176 residues: ATP-dependent protease subunit HslV (176 aa).

Thr2 is an active-site residue. Positions 157, 160, and 163 each coordinate Na(+).

Belongs to the peptidase T1B family. HslV subfamily. A double ring-shaped homohexamer of HslV is capped on each side by a ring-shaped HslU homohexamer. The assembly of the HslU/HslV complex is dependent on binding of ATP.

It is found in the cytoplasm. The enzyme catalyses ATP-dependent cleavage of peptide bonds with broad specificity.. Allosterically activated by HslU binding. In terms of biological role, protease subunit of a proteasome-like degradation complex believed to be a general protein degrading machinery. This chain is ATP-dependent protease subunit HslV, found in Pectobacterium carotovorum subsp. carotovorum (strain PC1).